Here is a 211-residue protein sequence, read N- to C-terminus: Uridine kinase (211 aa).

15 to 22 (GGSGSGKT) provides a ligand contact to ATP.

Belongs to the uridine kinase family.

The protein resides in the cytoplasm. It catalyses the reaction uridine + ATP = UMP + ADP + H(+). It carries out the reaction cytidine + ATP = CMP + ADP + H(+). It functions in the pathway pyrimidine metabolism; CTP biosynthesis via salvage pathway; CTP from cytidine: step 1/3. It participates in pyrimidine metabolism; UMP biosynthesis via salvage pathway; UMP from uridine: step 1/1. This chain is Uridine kinase, found in Latilactobacillus sakei subsp. sakei (strain 23K) (Lactobacillus sakei subsp. sakei).